Here is a 353-residue protein sequence, read N- to C-terminus: Spermidine/putrescine import ATP-binding protein PotA (353 aa).

The ABC transporter domain maps to 7-237; sequence IRFERVTKEY…PINRFVADFI (231 aa). 39–46 contributes to the ATP binding site; sequence GPSGCGKT.

It belongs to the ABC transporter superfamily. Spermidine/putrescine importer (TC 3.A.1.11.1) family. The complex is composed of two ATP-binding proteins (PotA), two transmembrane proteins (PotB and PotC) and a solute-binding protein (PotD).

Its subcellular location is the cell membrane. It catalyses the reaction ATP + H2O + polyamine-[polyamine-binding protein]Side 1 = ADP + phosphate + polyamineSide 2 + [polyamine-binding protein]Side 1.. Part of the ABC transporter complex PotABCD involved in spermidine/putrescine import. Responsible for energy coupling to the transport system. In Geobacillus kaustophilus (strain HTA426), this protein is Spermidine/putrescine import ATP-binding protein PotA.